The chain runs to 176 residues: Large ribosomal subunit protein uL6 (176 aa).

This sequence belongs to the universal ribosomal protein uL6 family. Part of the 50S ribosomal subunit.

Functionally, this protein binds to the 23S rRNA, and is important in its secondary structure. It is located near the subunit interface in the base of the L7/L12 stalk, and near the tRNA binding site of the peptidyltransferase center. The polypeptide is Large ribosomal subunit protein uL6 (Burkholderia mallei (strain NCTC 10247)).